A 500-amino-acid chain; its full sequence is Probable cytosol aminopeptidase (500 aa).

2 residues coordinate Mn(2+): lysine 268 and aspartate 273. Residue lysine 280 is part of the active site. Positions 291, 350, and 352 each coordinate Mn(2+). Arginine 354 is a catalytic residue.

The protein belongs to the peptidase M17 family. The cofactor is Mn(2+).

The protein resides in the cytoplasm. The catalysed reaction is Release of an N-terminal amino acid, Xaa-|-Yaa-, in which Xaa is preferably Leu, but may be other amino acids including Pro although not Arg or Lys, and Yaa may be Pro. Amino acid amides and methyl esters are also readily hydrolyzed, but rates on arylamides are exceedingly low.. It carries out the reaction Release of an N-terminal amino acid, preferentially leucine, but not glutamic or aspartic acids.. Its function is as follows. Presumably involved in the processing and regular turnover of intracellular proteins. Catalyzes the removal of unsubstituted N-terminal amino acids from various peptides. The chain is Probable cytosol aminopeptidase from Alkaliphilus metalliredigens (strain QYMF).